Reading from the N-terminus, the 770-residue chain is Cullin-1 (770 aa).

The region spanning 700 to 761 is the Cullin neddylation domain; sequence DRKLQIQAAI…EKEYLMRVEG (62 aa). Lys-714 is covalently cross-linked (Glycyl lysine isopeptide (Lys-Gly) (interchain with G-Cter in NEDD8)).

This sequence belongs to the cullin family. Part of a complex that includes culA, fbxA and regA. Formation of this complex is dependent on the MAP kinase erkB. Post-translationally, neddylated; which enhances the ubiquitination activity of SCF.

It functions in the pathway protein modification; protein ubiquitination. Probable core component of cullin-based SCF-like E3 ubiquitin-protein ligase complexes which mediate the ubiquitination and subsequent proteasomal degradation of target proteins. The E3 ubiquitin-protein ligase activity of the complex is dependent on the neddylation of the cullin subunit. Required at several stages during development. CulA and fbxA regulate multicellular development by targeting regA for degradation via a pathway that requires erkB function, leading to an increase in cAMP and PKA activity. This is Cullin-1 (culA) from Dictyostelium discoideum (Social amoeba).